A 159-amino-acid polypeptide reads, in one-letter code: 2-C-methyl-D-erythritol 2,4-cyclodiphosphate synthase (159 aa).

Positions 8 and 10 each coordinate a divalent metal cation. 4-CDP-2-C-methyl-D-erythritol 2-phosphate-binding positions include 8-10 (DVH) and 34-35 (HS). Histidine 42 lines the a divalent metal cation pocket. 4-CDP-2-C-methyl-D-erythritol 2-phosphate contacts are provided by residues 56 to 58 (DIG), 61 to 65 (FPDTD), 100 to 106 (AQAPKML), 132 to 135 (TTTE), phenylalanine 139, and arginine 142.

The protein belongs to the IspF family. In terms of assembly, homotrimer. It depends on a divalent metal cation as a cofactor.

The catalysed reaction is 4-CDP-2-C-methyl-D-erythritol 2-phosphate = 2-C-methyl-D-erythritol 2,4-cyclic diphosphate + CMP. It participates in isoprenoid biosynthesis; isopentenyl diphosphate biosynthesis via DXP pathway; isopentenyl diphosphate from 1-deoxy-D-xylulose 5-phosphate: step 4/6. In terms of biological role, involved in the biosynthesis of isopentenyl diphosphate (IPP) and dimethylallyl diphosphate (DMAPP), two major building blocks of isoprenoid compounds. Catalyzes the conversion of 4-diphosphocytidyl-2-C-methyl-D-erythritol 2-phosphate (CDP-ME2P) to 2-C-methyl-D-erythritol 2,4-cyclodiphosphate (ME-CPP) with a corresponding release of cytidine 5-monophosphate (CMP). This chain is 2-C-methyl-D-erythritol 2,4-cyclodiphosphate synthase, found in Salmonella typhimurium (strain LT2 / SGSC1412 / ATCC 700720).